We begin with the raw amino-acid sequence, 216 residues long: Adenylate kinase (216 aa).

10 to 15 (GAGKGT) is a binding site for ATP. The NMP stretch occupies residues 30–59 (STGDMLRAAVKAETPVGLKAKAVMEAGQLV). AMP contacts are provided by residues T31, R36, 57–59 (QLV), 85–88 (GYPR), and Q92. The segment at 126 to 164 (GRYTCATCGKGYHDKFEKPAVEGTCDKCGGHEFKRRPDD) is LID. Residue R127 coordinates ATP. Positions 130, 133, 150, and 153 each coordinate Zn(2+). AMP is bound by residues R161 and R172. A200 serves as a coordination point for ATP.

The protein belongs to the adenylate kinase family. As to quaternary structure, monomer.

The protein resides in the cytoplasm. It catalyses the reaction AMP + ATP = 2 ADP. It functions in the pathway purine metabolism; AMP biosynthesis via salvage pathway; AMP from ADP: step 1/1. Functionally, catalyzes the reversible transfer of the terminal phosphate group between ATP and AMP. Plays an important role in cellular energy homeostasis and in adenine nucleotide metabolism. The sequence is that of Adenylate kinase from Novosphingobium aromaticivorans (strain ATCC 700278 / DSM 12444 / CCUG 56034 / CIP 105152 / NBRC 16084 / F199).